A 310-amino-acid polypeptide reads, in one-letter code: Malate dehydrogenase (310 aa).

Residues 7–12 (GAGNVG) and D32 contribute to the NAD(+) site. Positions 81 and 87 each coordinate substrate. NAD(+) contacts are provided by residues N94 and 117-119 (VSN). Residues N119 and R150 each coordinate substrate. Catalysis depends on H174, which acts as the Proton acceptor.

This sequence belongs to the LDH/MDH superfamily. MDH type 3 family.

It catalyses the reaction (S)-malate + NAD(+) = oxaloacetate + NADH + H(+). Its function is as follows. Catalyzes the reversible oxidation of malate to oxaloacetate. This chain is Malate dehydrogenase, found in Chlorobium phaeobacteroides (strain DSM 266 / SMG 266 / 2430).